Here is a 345-residue protein sequence, read N- to C-terminus: Transmembrane protein 144 homolog (345 aa).

Transmembrane regions (helical) follow at residues I3 to P23, G32 to S52, P61 to M81, I84 to A104, P120 to I140, L193 to I213, V233 to I253, L265 to V285, A293 to F313, and L324 to S344.

Belongs to the TMEM144 family.

It is found in the membrane. The polypeptide is Transmembrane protein 144 homolog (Caenorhabditis elegans).